The following is a 1070-amino-acid chain: DNA-directed RNA polymerase subunit beta (1070 aa).

This sequence belongs to the RNA polymerase beta chain family. In plastids the minimal PEP RNA polymerase catalytic core is composed of four subunits: alpha, beta, beta', and beta''. When a (nuclear-encoded) sigma factor is associated with the core the holoenzyme is formed, which can initiate transcription.

It is found in the plastid. The protein localises to the chloroplast. The enzyme catalyses RNA(n) + a ribonucleoside 5'-triphosphate = RNA(n+1) + diphosphate. Functionally, DNA-dependent RNA polymerase catalyzes the transcription of DNA into RNA using the four ribonucleoside triphosphates as substrates. The chain is DNA-directed RNA polymerase subunit beta from Populus trichocarpa (Western balsam poplar).